An 81-amino-acid chain; its full sequence is Acyl carrier protein (81 aa).

The 76-residue stretch at 5–80 folds into the Carrier domain; sequence EEIFSKVKSI…DIVSYIEKKL (76 aa). The residue at position 40 (serine 40) is an O-(pantetheine 4'-phosphoryl)serine.

The protein belongs to the acyl carrier protein (ACP) family. Post-translationally, 4'-phosphopantetheine is transferred from CoA to a specific serine of apo-ACP by AcpS. This modification is essential for activity because fatty acids are bound in thioester linkage to the sulfhydryl of the prosthetic group.

It localises to the cytoplasm. Its pathway is lipid metabolism; fatty acid biosynthesis. Functionally, carrier of the growing fatty acid chain in fatty acid biosynthesis. The chain is Acyl carrier protein from Thermotoga maritima (strain ATCC 43589 / DSM 3109 / JCM 10099 / NBRC 100826 / MSB8).